Consider the following 763-residue polypeptide: Phosphoglycerol transferase I (763 aa).

4 consecutive transmembrane segments (helical) span residues 1–21 (MSEL…AWKA), 26–46 (WWFA…ITLY), 77–97 (ILPG…LGWV), and 108–128 (VGYS…SPAF).

This sequence belongs to the OpgB family.

It localises to the cell inner membrane. It catalyses the reaction a phosphatidylglycerol + a membrane-derived-oligosaccharide D-glucose = a 1,2-diacyl-sn-glycerol + a membrane-derived-oligosaccharide 6-(glycerophospho)-D-glucose.. Its pathway is glycan metabolism; osmoregulated periplasmic glucan (OPG) biosynthesis. Functionally, transfers a phosphoglycerol residue from phosphatidylglycerol to the membrane-bound nascent glucan backbones. The polypeptide is Phosphoglycerol transferase I (Salmonella schwarzengrund (strain CVM19633)).